Consider the following 727-residue polypeptide: Synaptic vesicle glycoprotein 2C (727 aa).

The interaction with SYT1 stretch occupies residues 1-57; that stretch reads MEDSYKDRTSLMKGAKDIAKEVKKQTVKKVNQAVDRAQDEYTQRSYSRFQDEEDDDD. The Cytoplasmic portion of the chain corresponds to 1 to 154; that stretch reads MEDSYKDRTS…CGHGRFQWAL (154 aa). The tract at residues 22–128 is disordered; the sequence is VKKQTVKKVN…DRRELESERR (107 aa). A phosphoserine mark is found at Ser-75 and Ser-76. Phosphothreonine is present on Thr-79. Positions 113–128 are enriched in basic and acidic residues; it reads KGDEYKDRRELESERR. Residues 155-175 form a helical membrane-spanning segment; sequence FFVLGMALMADGVEVFVVGFV. Residues 176 to 191 are Extracellular-facing; sequence LPSAETDLCIPNSGSG. A helical transmembrane segment spans residues 192 to 212; the sequence is WLGSIVYLGMMVGAFFWGGLA. Topologically, residues 213–226 are cytoplasmic; it reads DKVGRKQSLLICMS. Residues 227-247 form a helical membrane-spanning segment; that stretch reads VNGFFAFLSSFVQGYGFFLVC. Residue Arg-248 is a topological domain, extracellular. Residues 249–269 traverse the membrane as a helical segment; it reads LLSGFGIGGAIPTVFSYFAEV. At 270–280 the chain is on the cytoplasmic side; it reads LAREKRGEHLS. Residues 281 to 301 form a helical membrane-spanning segment; sequence WLCMFWMIGGIYASAMAWAII. Residues 302 to 320 are Extracellular-facing; the sequence is PHYGWSFSMGSAYQFHSWR. Residues 321 to 341 form a helical membrane-spanning segment; that stretch reads VFVIVCALPCVSSVVALTFMP. Residues 342-437 lie on the Cytoplasmic side of the membrane; that stretch reads ESPRFLLEVG…PVRENTIKLT (96 aa). The helical transmembrane segment at 438–458 threads the bilayer; sequence IVWFTLSFGYYGLSVWFPDVI. Residues 459-578 lie on the Extracellular side of the membrane; that stretch reads KHLQSDEYAL…CQITFDDDYS (120 aa). A Phosphotyrosine modification is found at Tyr-466. N-linked (GlcNAc...) asparagine glycosylation is found at Asn-480, Asn-484, Asn-534, Asn-559, and Asn-565. The chain crosses the membrane as a helical span at residues 579–599; that stretch reads AYWIYFVNFLGTLAVLPGNIV. The Cytoplasmic segment spans residues 600–609; the sequence is SALLMDRIGR. Residues 610–630 traverse the membrane as a helical segment; the sequence is LTMLGGSMVLSGISCFFLWFG. The Extracellular portion of the chain corresponds to 631-636; sequence TSESMM. The chain crosses the membrane as a helical span at residues 637–657; that stretch reads IGMLCLYNGLTISAWNSLDVV. Topologically, residues 658–670 are cytoplasmic; that stretch reads TVELYPTDRRATG. A helical membrane pass occupies residues 671-693; the sequence is FGFLNALCKAAAVLGNLIFGSLV. The Extracellular segment spans residues 694 to 697; the sequence is SITK. A helical membrane pass occupies residues 698–716; sequence AIPILLASTVLVCGGLVGL. At 717–727 the chain is on the cytoplasmic side; sequence RLPDTRTQVLM.

This sequence belongs to the major facilitator superfamily. As to quaternary structure, interacts with SYT1 in a calcium-dependent manner. In terms of assembly, (Microbial infection) Interacts with C.botulinum neurotoxin type A (BoNT/A, botA). (Microbial infection) Interacts with C.botulinum neurotoxin type D (BoNT/D, botD). N-glycosylated. As to expression, expressed in specific subsets of conventional synapses in the retina (at protein level). Expressed in diaphragm motor nerve terminals (at protein level). Expressed in a subset of hippocampus neurons (at protein level).

Its subcellular location is the cytoplasmic vesicle. It localises to the secretory vesicle. The protein localises to the synaptic vesicle membrane. In terms of biological role, plays a role in the control of regulated secretion in neural and endocrine cells, enhancing selectively low-frequency neurotransmission. Positively regulates vesicle fusion by maintaining the readily releasable pool of secretory vesicles. Its function is as follows. (Microbial infection) Receptor for C.botulinum neurotoxin type A (BoNT/A, botA); the toxin binds Sv2c via extracellular loop 4. Functionally, (Microbial infection) Possible receptor for C.botulinum neurotoxin type D (BoNT/D, botD). The polypeptide is Synaptic vesicle glycoprotein 2C (Sv2c) (Mus musculus (Mouse)).